Reading from the N-terminus, the 388-residue chain is Protein RMD5 homolog (388 aa).

The 33-residue stretch at 112–144 (DTHIVNQIIANFFYRQGMFDIGDCFVAETGESE) folds into the LisH domain. A CTLH domain is found at 150–207 (SFVEMYRILEAMKRRDLEPALNWAVSNSDKLKEARSDLEMKLHSLHFLEIARGKNSKE). Residues 330–374 (CPVSKEQSSDDNPPMMMSCGHVLCKQTINKMSKNGSKSSFKCPYC) form an RING-Gid-type zinc finger.

As to quaternary structure, interacts with RANBPM.

Its subcellular location is the cytoplasm. The chain is Protein RMD5 homolog from Arabidopsis thaliana (Mouse-ear cress).